We begin with the raw amino-acid sequence, 334 residues long: MDSAVALSVLGAGSYGTALAISLARQGQPVLLWGHDPQQVARLQQDRCNQEFLPDVPFPDSLQMTDDLAYAVSASRDLLVVVPSHVFGEVLLRIKPFMRPDTRVAWATKGLEPEHGRLLGDVAKEILGEQIPLAVLSGPTFARELAAGMPTAIAIAGTDEQFTSDMSALMHCGKSLRVYTNPDFIGLQIGGAVKNVIAIGAGLSDGLGFGANARTALITRGLVELQRLGLSLGADAKTFMGMAGLGDLVLTCTDNQSRNRRFGLALGQGKTVEQAMTEIGQVVEGYRNTKEVHVLAARQNVEMPICEQIYQILYQGKSAQDAALALLGRDQKGE.

The NADPH site is built by Ser14, Tyr15, His35, and Lys109. Residues Lys109, Gly138, and Thr140 each coordinate sn-glycerol 3-phosphate. Ala142 contributes to the NADPH binding site. Sn-glycerol 3-phosphate-binding residues include Lys194, Asp247, Ser257, Arg258, and Asn259. Lys194 (proton acceptor) is an active-site residue. Position 258 (Arg258) interacts with NADPH. The NADPH site is built by Val282 and Glu284.

Belongs to the NAD-dependent glycerol-3-phosphate dehydrogenase family.

It localises to the cytoplasm. It catalyses the reaction sn-glycerol 3-phosphate + NAD(+) = dihydroxyacetone phosphate + NADH + H(+). The enzyme catalyses sn-glycerol 3-phosphate + NADP(+) = dihydroxyacetone phosphate + NADPH + H(+). It functions in the pathway membrane lipid metabolism; glycerophospholipid metabolism. Catalyzes the reduction of the glycolytic intermediate dihydroxyacetone phosphate (DHAP) to sn-glycerol 3-phosphate (G3P), the key precursor for phospholipid synthesis. The polypeptide is Glycerol-3-phosphate dehydrogenase [NAD(P)+] (Tolumonas auensis (strain DSM 9187 / NBRC 110442 / TA 4)).